A 253-amino-acid polypeptide reads, in one-letter code: 2,3-bisphosphoglycerate-dependent phosphoglycerate mutase (253 aa).

Substrate contacts are provided by residues 12-19 (RHGESEWN), 25-26 (TG), Arg64, 91-94 (ERHY), Lys102, and 118-119 (RR). His13 serves as the catalytic Tele-phosphohistidine intermediate. Glu91 acts as the Proton donor/acceptor in catalysis. A disordered region spans residues 126–148 (PPLADGSEFSQSDDPRYASIPPE). 187 to 188 (GN) is a substrate binding site.

Belongs to the phosphoglycerate mutase family. BPG-dependent PGAM subfamily.

It catalyses the reaction (2R)-2-phosphoglycerate = (2R)-3-phosphoglycerate. It functions in the pathway carbohydrate degradation; glycolysis; pyruvate from D-glyceraldehyde 3-phosphate: step 3/5. In terms of biological role, catalyzes the interconversion of 2-phosphoglycerate and 3-phosphoglycerate. The sequence is that of 2,3-bisphosphoglycerate-dependent phosphoglycerate mutase from Streptomyces avermitilis (strain ATCC 31267 / DSM 46492 / JCM 5070 / NBRC 14893 / NCIMB 12804 / NRRL 8165 / MA-4680).